We begin with the raw amino-acid sequence, 102 residues long: Large ribosomal subunit protein bL21 (102 aa).

This sequence belongs to the bacterial ribosomal protein bL21 family. As to quaternary structure, part of the 50S ribosomal subunit. Contacts protein L20.

Functionally, this protein binds to 23S rRNA in the presence of protein L20. This chain is Large ribosomal subunit protein bL21, found in Macrococcus caseolyticus (strain JCSC5402) (Macrococcoides caseolyticum).